Reading from the N-terminus, the 786-residue chain is Probable glutamine--tRNA ligase (786 aa).

A compositionally biased stretch (basic and acidic residues) spans 181–198; that stretch reads DLAPKKKEKKPEGPKPSK. A disordered region spans residues 181 to 218; the sequence is DLAPKKKEKKPEGPKPSKDAAAAATAPGTKNQKEASPE. The 'HIGH' region signature appears at 276 to 286; the sequence is PEPNGVLHIGH. ATP contacts are provided by residues 277-279 and 283-289; these read EPN and HIGHAKA. Asp309 and Tyr444 together coordinate L-glutamine. Residues Thr463, 492-493, and 500-502 contribute to the ATP site; these read RL and VSK. The 'KMSKS' region motif lies at 499–503; the sequence is VVSKR.

This sequence belongs to the class-I aminoacyl-tRNA synthetase family.

It carries out the reaction tRNA(Gln) + L-glutamine + ATP = L-glutaminyl-tRNA(Gln) + AMP + diphosphate. The chain is Probable glutamine--tRNA ligase from Caenorhabditis elegans.